Consider the following 346-residue polypeptide: Enoyl-[acyl-carrier-protein] reductase, mitochondrial (346 aa).

A mitochondrion-targeting transit peptide spans 1–22 (MQKTIRSQALIYRKFGDPLKVL). Residue tyrosine 59 is the Proton donor of the active site. NADP(+) is bound by residues asparagine 131, 157-160 (NSGV), 180-182 (RNR), 249-252 (YGGM), 274-276 (VAV), and lysine 332.

This sequence belongs to the zinc-containing alcohol dehydrogenase family. Quinone oxidoreductase subfamily. As to quaternary structure, homodimer.

The protein localises to the mitochondrion. It catalyses the reaction a 2,3-saturated acyl-[ACP] + NADP(+) = a (2E)-enoyl-[ACP] + NADPH + H(+). Catalyzes the NADPH-dependent reduction of trans-2-enoyl thioesters in mitochondrial fatty acid synthesis (fatty acid synthesis type II). Fatty acid chain elongation in mitochondria uses acyl carrier protein (ACP) as an acyl group carrier, but the enzyme accepts both ACP and CoA thioesters as substrates in vitro. May provide the octanoyl chain used for lipoic acid biosynthesis, regulating protein lipoylation and mitochondrial respiratory activity. Involved in iron homeostasis; affecting Fe-S cluster assembly and ceramide metabolism. Required for proper morphology and bioenergetic functions of mitochondria. Required for maintenance of neurons. The sequence is that of Enoyl-[acyl-carrier-protein] reductase, mitochondrial from Caenorhabditis elegans.